A 408-amino-acid chain; its full sequence is Zinc chaperone AztD (408 aa).

A signal peptide spans 1-21 (MLRHLAGASALALTLAGAGFA). An N-terminal Zn(2+)-binding motif; binds a third Zn(2+) with low affinity motif is present at residues 23-29 (DHDHDHE). His-99, His-102, Asp-104, His-124, His-167, His-218, and His-408 together coordinate Zn(2+). A disulfide bond links Cys-214 and Cys-231.

Monomer.

Its subcellular location is the periplasm. Acts as a zinc chaperone in the AztABCD zinc transport system. Directly transfers one zinc cation to the solute binding protein AztC; the transfer occurs without the formation of a stable interaction. Binds 3 Zn(2+), two with high affinity and one with low affinity, and transfers only Zn(2+) bound to site 2 to AztC. Likely functions to store zinc in the periplasm and may be important for zinc accumulation in zinc-limited environments. This chain is Zinc chaperone AztD, found in Paracoccus denitrificans (strain Pd 1222).